The primary structure comprises 255 residues: Type III pantothenate kinase (255 aa).

6–13 provides a ligand contact to ATP; sequence DIGNTNIV. A substrate-binding site is contributed by 107 to 110; the sequence is GSDC. The active-site Proton acceptor is aspartate 109. Residue aspartate 129 coordinates K(+). ATP is bound at residue threonine 132. Threonine 184 serves as a coordination point for substrate.

It belongs to the type III pantothenate kinase family. As to quaternary structure, homodimer. The cofactor is NH4(+). Requires K(+) as cofactor.

The protein resides in the cytoplasm. The catalysed reaction is (R)-pantothenate + ATP = (R)-4'-phosphopantothenate + ADP + H(+). It functions in the pathway cofactor biosynthesis; coenzyme A biosynthesis; CoA from (R)-pantothenate: step 1/5. In terms of biological role, catalyzes the phosphorylation of pantothenate (Pan), the first step in CoA biosynthesis. This Bifidobacterium longum subsp. infantis (strain ATCC 15697 / DSM 20088 / JCM 1222 / NCTC 11817 / S12) protein is Type III pantothenate kinase.